Reading from the N-terminus, the 703-residue chain is Serotransferrin (703 aa).

Positions 1–19 (MDLSLHVALCLGMLALCLA) are cleaved as a signal peptide. Transferrin-like domains follow at residues 27–341 (VRWC…ALKE) and 354–686 (VRWC…SLNK). 2 disulfides stabilise this stretch: C30-C65 and C40-C56. Residues D80 and Y112 each coordinate Fe(3+). 3 cysteine pairs are disulfide-bonded: C135-C218, C180-C193, and C246-C260. Residues T137, K141, A143, and G144 each coordinate hydrogencarbonate. Y212 contacts Fe(3+). Residue H268 coordinates Fe(3+). The segment at 341–350 (EGVKEDDLAA) is connecting region. Disulfide bonds link C357–C389 and C367–C380. D404 and Y443 together coordinate Fe(3+). Cystine bridges form between C414–C698, C432–C659, C466–C545, C490–C687, C500–C514, C511–C528, and C585–C599. Positions 468, 472, 474, and 475 each coordinate hydrogencarbonate. Y539 lines the Fe(3+) pocket. H607 serves as a coordination point for Fe(3+).

This sequence belongs to the transferrin family. Monomer. Plasma.

It localises to the secreted. Transferrins are iron binding transport proteins which can bind two Fe(3+) ions in association with the binding of an anion, usually bicarbonate. It is responsible for the transport of iron from sites of absorption and heme degradation to those of storage and utilization. Serum transferrin may also have a further role in stimulating cell proliferation. In Xenopus tropicalis (Western clawed frog), this protein is Serotransferrin (tf).